The following is a 165-amino-acid chain: ATP synthase subunit b (165 aa).

The helical transmembrane segment at 10 to 30 (LIFWMLLSFGIVFAVLAKYGF) threads the bilayer.

Belongs to the ATPase B chain family. In terms of assembly, F-type ATPases have 2 components, F(1) - the catalytic core - and F(0) - the membrane proton channel. F(1) has five subunits: alpha(3), beta(3), gamma(1), delta(1), epsilon(1). F(0) has three main subunits: a(1), b(2) and c(10-14). The alpha and beta chains form an alternating ring which encloses part of the gamma chain. F(1) is attached to F(0) by a central stalk formed by the gamma and epsilon chains, while a peripheral stalk is formed by the delta and b chains.

It localises to the cell inner membrane. Its function is as follows. F(1)F(0) ATP synthase produces ATP from ADP in the presence of a proton or sodium gradient. F-type ATPases consist of two structural domains, F(1) containing the extramembraneous catalytic core and F(0) containing the membrane proton channel, linked together by a central stalk and a peripheral stalk. During catalysis, ATP synthesis in the catalytic domain of F(1) is coupled via a rotary mechanism of the central stalk subunits to proton translocation. Component of the F(0) channel, it forms part of the peripheral stalk, linking F(1) to F(0). This is ATP synthase subunit b from Bacteroides fragilis (strain ATCC 25285 / DSM 2151 / CCUG 4856 / JCM 11019 / LMG 10263 / NCTC 9343 / Onslow / VPI 2553 / EN-2).